The primary structure comprises 213 residues: Histone H1 (213 aa).

Residues 1–25 (MAAATASAAATPAKKAAPKKPAAAP) are compositionally biased toward low complexity. Disordered regions lie at residues 1 to 30 (MAAATASAAATPAKKAAPKKPAAAPEHPSY) and 81 to 213 (GEFV…AKSS). One can recognise an H15 domain in the interval 26–97 (EHPSYKEMLT…GPSGTVKLAK (72 aa)). Low complexity-rich tracts occupy residues 102–113 (AAAPKKPAAKKA), 123–137 (KKAAAPKKAAAPKSA), 157–176 (KKAAAPKKVAAPVEKPAPVK), and 203–213 (PKKAATPAKSS).

The protein belongs to the histone H1/H5 family.

The protein localises to the nucleus. It localises to the chromosome. In terms of biological role, could act as an H1-type linker histone. In Ascobolus immersus, this protein is Histone H1.